The chain runs to 111 residues: UPF0060 membrane protein NFA_36830 (111 aa).

4 helical membrane-spanning segments follow: residues Leu-7 to Gly-27, Gly-33 to Phe-53, Val-62 to Asp-82, and Leu-91 to Gly-111.

This sequence belongs to the UPF0060 family.

Its subcellular location is the cell membrane. In Nocardia farcinica (strain IFM 10152), this protein is UPF0060 membrane protein NFA_36830.